A 114-amino-acid polypeptide reads, in one-letter code: UPF0342 protein SSP0954 (114 aa).

This sequence belongs to the UPF0342 family.

The protein is UPF0342 protein SSP0954 of Staphylococcus saprophyticus subsp. saprophyticus (strain ATCC 15305 / DSM 20229 / NCIMB 8711 / NCTC 7292 / S-41).